Consider the following 230-residue polypeptide: Probable tetraspanin tspD (230 aa).

Residues 1-20 lie on the Cytoplasmic side of the membrane; sequence MVEYLPSTPRYLKVPLIILN. The helical transmembrane segment at 21 to 41 threads the bilayer; the sequence is VILWLLGLVLVIIGGICVGFF. At 42–65 the chain is on the extracellular side; the sequence is SRFKELQEVGGVSESIKSISVSLP. The chain crosses the membrane as a helical span at residues 66–86; sequence AGVLSIGIFFMVLTVAGCIVA. The Cytoplasmic portion of the chain corresponds to 87-90; the sequence is YKEK. A helical membrane pass occupies residues 91–111; the sequence is MVGLVFYTILMLVLLVVLIGI. The Extracellular portion of the chain corresponds to 112-200; it reads GGEALTYHNA…VNSKLYLVGS (89 aa). N-linked (GlcNAc...) asparagine glycosylation is found at N133, N138, N163, and N179. A helical transmembrane segment spans residues 201 to 221; sequence AGVAIGVIELVSLMFALFLIV. The Cytoplasmic segment spans residues 222–230; sequence RLYKSNSYR.

It belongs to the tetraspanin (TM4SF) family.

The protein resides in the membrane. This is Probable tetraspanin tspD (tspD) from Dictyostelium discoideum (Social amoeba).